Reading from the N-terminus, the 224-residue chain is Pyridoxine/pyridoxamine 5'-phosphate oxidase (224 aa).

Residues 69 to 74, 83 to 84, Arg-89, Lys-90, and Gln-112 each bind FMN; these read RHVLLK and FT. Lys-74 is a binding site for substrate. The substrate site is built by Tyr-130, Arg-134, and Ser-138. FMN is bound by residues 148-149 and Trp-194; that span reads QS. Residue 200–202 participates in substrate binding; it reads RMH. Residue Arg-204 coordinates FMN.

This sequence belongs to the pyridoxamine 5'-phosphate oxidase family. In terms of assembly, homodimer. FMN serves as cofactor.

It carries out the reaction pyridoxamine 5'-phosphate + O2 + H2O = pyridoxal 5'-phosphate + H2O2 + NH4(+). It catalyses the reaction pyridoxine 5'-phosphate + O2 = pyridoxal 5'-phosphate + H2O2. Its pathway is cofactor metabolism; pyridoxal 5'-phosphate salvage; pyridoxal 5'-phosphate from pyridoxamine 5'-phosphate: step 1/1. It functions in the pathway cofactor metabolism; pyridoxal 5'-phosphate salvage; pyridoxal 5'-phosphate from pyridoxine 5'-phosphate: step 1/1. In terms of biological role, catalyzes the oxidation of either pyridoxine 5'-phosphate (PNP) or pyridoxamine 5'-phosphate (PMP) into pyridoxal 5'-phosphate (PLP). The sequence is that of Pyridoxine/pyridoxamine 5'-phosphate oxidase from Acidothermus cellulolyticus (strain ATCC 43068 / DSM 8971 / 11B).